Consider the following 223-residue polypeptide: Translation initiation factor 6 (223 aa).

The protein belongs to the eIF-6 family. Associates with the 50S ribosomal subunit, specifically with protein L14. Binds to 23S rRNA, possibly between where the 30S and 50S subunits associate to initiate translation. Post-translationally, modified in an unknown fashion (not phosphorylation) following release from 50S ribosomal subunits.

In terms of biological role, binds to the 50S ribosomal subunit and prevents its association with the 30S ribosomal subunit to form the 70S initiation complex. Inhibits translation of both leadered and leaderless mRNAs, maybe by binding to the 50S ribosome subunit, preventing it from binding to the 30S subunit. This is Translation initiation factor 6 from Saccharolobus solfataricus (strain ATCC 35092 / DSM 1617 / JCM 11322 / P2) (Sulfolobus solfataricus).